Consider the following 166-residue polypeptide: Large ribosomal subunit protein uL10 (166 aa).

Belongs to the universal ribosomal protein uL10 family. As to quaternary structure, part of the ribosomal stalk of the 50S ribosomal subunit. The N-terminus interacts with L11 and the large rRNA to form the base of the stalk. The C-terminus forms an elongated spine to which L12 dimers bind in a sequential fashion forming a multimeric L10(L12)X complex.

Its function is as follows. Forms part of the ribosomal stalk, playing a central role in the interaction of the ribosome with GTP-bound translation factors. This chain is Large ribosomal subunit protein uL10, found in Hydrogenovibrio crunogenus (strain DSM 25203 / XCL-2) (Thiomicrospira crunogena).